The following is a 3511-amino-acid chain: Unconventional myosin-XV (3511 aa).

Disordered regions lie at residues 1–44 (MADE…TPKI), 574–690 (KKPI…SLRQ), 712–1030 (FAEP…PNKN), and 1105–1135 (VSSFRPKGPAPVQPPEHPDQDPEQGPAPQAC). The span at 622-634 (SQPQARNNNNSHG) shows a compositional bias: polar residues. A compositionally biased stretch (pro residues) spans 654-672 (PPMPAPSPSPASPLTPPFS). A compositionally biased stretch (low complexity) spans 769 to 792 (PSLRSLPGQGYHSPLGPLSPQLSL). The segment covering 797 to 807 (FQPPFPPPPRR) has biased composition (pro residues). Positions 1206–1883 (DGVEDMTQLE…LHQLLESMRE (678 aa)) constitute a Myosin motor domain. 1299 to 1306 (GESGSGKT) serves as a coordination point for ATP. Residues 1307-1334 (EATKLILRCLAAMNQRRDVMQQIKILEA) are a coiled coil. The actin-binding stretch occupies residues 1776 to 1783 (FVRCLKPN). Residues 1872-2013 (EHLHQLLESM…SSGPRVAVVR (142 aa)) form a neck or regulatory domain region. IQ domains follow at residues 1886–1908 (QNRAALTLQRYLRGFFIQRHFRS) and 1909–1938 (LRRKIILLQSRARGFLARQRYQQMRQSLLK). The interval 2014 to 3511 (APRLQAEPCV…TLPPSEITLL (1498 aa)) is tail. Residues 2049 to 2195 (MLTVPLKMPL…PTQLEWTAIQ (147 aa)) enclose the MyTH4 1 domain. Disordered stretches follow at residues 2330–2359 (SHKEDGTNGETEAQRWTSNRQAVDSIGEST), 2392–2425 (YRMKGGGQPGGGGGSTSEDTSRRPPEPKLKPIPG), 2460–2509 (PLSA…SVAK), 2565–2584 (KQPPWAGHPEARRTDGGKVF), and 2629–2648 (RPCMGPTPVQPSRSLEPPED). Over residues 2337–2351 (NGETEAQRWTSNRQA) the composition is skewed to polar residues. Residues 2395-2406 (KGGGQPGGGGGS) show a composition bias toward gly residues. Residues 2410–2420 (DTSRRPPEPKL) show a composition bias toward basic and acidic residues. The span at 2573–2584 (PEARRTDGGKVF) shows a compositional bias: basic and acidic residues. Residues 2848 to 2934 (KDSDYVVAVR…PSELVQPAAA (87 aa)) enclose the SH3 domain. Residues 2964-2984 (EVGRRREGPPVRARSADSGED) are disordered. The span at 2965 to 2980 (VGRRREGPPVRARSAD) shows a compositional bias: basic and acidic residues. The MyTH4 2 domain occupies 3031 to 3185 (FTKVPIQESL…PSNMELRAML (155 aa)). Positions 3190–3511 (SKRQLFLLPG…TLPPSEITLL (322 aa)) constitute an FERM domain.

Belongs to the TRAFAC class myosin-kinesin ATPase superfamily. Myosin family. In terms of assembly, interacts with the third PDZ domain of WHRN which is necessary for localization of WHRN to stereocilium tips. Interacts with FASLG. Interacts with EPS8. As to expression, in the developing inner ear, expressed in cochlea and vestibular apparatus. Expression appears to be restricted to cochlear neurosensory cells and upper epithelial layer of macula saccula. Also expressed in macula utriculi and cristae ampullaris of the semicircular canals. In adult cochlear hair cells, highest expression in stereocilia and apical body.

Its subcellular location is the cell projection. It is found in the stereocilium. It localises to the cytoplasm. The protein localises to the cytoskeleton. Functionally, myosins are actin-based motor molecules with ATPase activity. Unconventional myosins serve in intracellular movements. Their highly divergent tails are presumed to bind to membranous compartments, which would be moved relative to actin filaments. Required for the arrangement of stereocilia in mature hair bundles. The polypeptide is Unconventional myosin-XV (Myo15a) (Mus musculus (Mouse)).